Reading from the N-terminus, the 1226-residue chain is Methionine synthase (1226 aa).

Residues 7–327 form the Hcy-binding domain; the sequence is KVQIEKQLSE…EHIRQMALVV (321 aa). Positions 249, 312, and 313 each coordinate Zn(2+). Residues 358-619 form the Pterin-binding domain; that stretch reads FINVGERTNV…VPEDLREAVE (262 aa). In terms of domain architecture, B12-binding N-terminal spans 652 to 746; the sequence is SALEWRDWPV…FINASKEVGA (95 aa). Residues glutamate 696, 758–762, histidine 761, serine 806, threonine 810, and alanine 862 contribute to the methylcob(III)alamin site; that span reads GDVHD. In terms of domain architecture, B12-binding spans 748-883; that stretch reads NGKILLATVK…SDELKPSFVE (136 aa). The AdoMet activation domain occupies 899-1226; the sequence is KQPRTKPVTL…AEKWLGPNLN (328 aa). S-adenosyl-L-methionine is bound by residues aspartate 949, arginine 1137, and 1192–1193; that span reads YF.

This sequence belongs to the vitamin-B12 dependent methionine synthase family. Methylcob(III)alamin serves as cofactor. Requires Zn(2+) as cofactor.

It carries out the reaction (6S)-5-methyl-5,6,7,8-tetrahydrofolate + L-homocysteine = (6S)-5,6,7,8-tetrahydrofolate + L-methionine. The protein operates within amino-acid biosynthesis; L-methionine biosynthesis via de novo pathway; L-methionine from L-homocysteine (MetH route): step 1/1. Catalyzes the transfer of a methyl group from methyl-cobalamin to homocysteine, yielding enzyme-bound cob(I)alamin and methionine. Subsequently, remethylates the cofactor using methyltetrahydrofolate. This Aliivibrio fischeri (strain ATCC 700601 / ES114) (Vibrio fischeri) protein is Methionine synthase (metH).